We begin with the raw amino-acid sequence, 284 residues long: tRNA uridine(34) hydroxylase (284 aa).

The Rhodanese domain occupies 132–226; that stretch reads AGRPVVMLDT…YFEEVGGAHY (95 aa). Cysteine 186 (cysteine persulfide intermediate) is an active-site residue.

This sequence belongs to the TrhO family.

It catalyses the reaction uridine(34) in tRNA + AH2 + O2 = 5-hydroxyuridine(34) in tRNA + A + H2O. Catalyzes oxygen-dependent 5-hydroxyuridine (ho5U) modification at position 34 in tRNAs. The chain is tRNA uridine(34) hydroxylase from Burkholderia ambifaria (strain MC40-6).